A 407-amino-acid polypeptide reads, in one-letter code: Peptidase T (407 aa).

His-82 is a Zn(2+) binding site. Residue Asp-84 is part of the active site. Asp-143 lines the Zn(2+) pocket. Glu-177 acts as the Proton acceptor in catalysis. Residues Glu-178, Asp-200, and His-382 each contribute to the Zn(2+) site.

This sequence belongs to the peptidase M20B family. Requires Zn(2+) as cofactor.

It localises to the cytoplasm. The catalysed reaction is Release of the N-terminal residue from a tripeptide.. Functionally, cleaves the N-terminal amino acid of tripeptides. This is Peptidase T from Streptococcus pyogenes serotype M3 (strain ATCC BAA-595 / MGAS315).